Reading from the N-terminus, the 85-residue chain is Putative membrane protein insertion efficiency factor (85 aa).

The segment at 66–85 (PLNSGGDDPVPPKLDDNREH) is disordered.

Belongs to the UPF0161 family.

Its subcellular location is the cell inner membrane. Could be involved in insertion of integral membrane proteins into the membrane. The polypeptide is Putative membrane protein insertion efficiency factor (Yersinia pestis bv. Antiqua (strain Antiqua)).